The following is a 390-amino-acid chain: Chalcone synthase (390 aa).

Cys-164 is an active-site residue.

This sequence belongs to the thiolase-like superfamily. Chalcone/stilbene synthases family.

The enzyme catalyses (E)-4-coumaroyl-CoA + 3 malonyl-CoA + 3 H(+) = 2',4,4',6'-tetrahydroxychalcone + 3 CO2 + 4 CoA. It participates in secondary metabolite biosynthesis; flavonoid biosynthesis. In terms of biological role, the primary product of this enzyme is 4,2',4',6'-tetrahydroxychalcone (also termed naringenin-chalcone or chalcone) which can under specific conditions spontaneously isomerize into naringenin. The chain is Chalcone synthase (CHS) from Antirrhinum majus (Garden snapdragon).